Here is a 250-residue protein sequence, read N- to C-terminus: Triosephosphate isomerase (250 aa).

9 to 11 (NWK) provides a ligand contact to substrate. Catalysis depends on H95, which acts as the Electrophile. The active-site Proton acceptor is the E167. Residues G173, S213, and 234 to 235 (GG) each bind substrate.

It belongs to the triosephosphate isomerase family. Homodimer.

It is found in the cytoplasm. The enzyme catalyses D-glyceraldehyde 3-phosphate = dihydroxyacetone phosphate. Its pathway is carbohydrate biosynthesis; gluconeogenesis. The protein operates within carbohydrate degradation; glycolysis; D-glyceraldehyde 3-phosphate from glycerone phosphate: step 1/1. Functionally, involved in the gluconeogenesis. Catalyzes stereospecifically the conversion of dihydroxyacetone phosphate (DHAP) to D-glyceraldehyde-3-phosphate (G3P). This Flavobacterium psychrophilum (strain ATCC 49511 / DSM 21280 / CIP 103535 / JIP02/86) protein is Triosephosphate isomerase.